A 471-amino-acid chain; its full sequence is Cleavage and polyadenylation specificity factor subunit 7 (471 aa).

Positions 34–68 (VLTAASQPSDDRSSSTEPPPPVRQEPAPKPNNKTP) are disordered. Residues 50 to 62 (EPPPPVRQEPAPK) are compositionally biased toward pro residues. The RRM domain maps to 82–162 (AAVYVGSFSW…EKVDVRPATR (81 aa)). The tract at residues 176 to 220 (ECVRVPRGGIPPRAHSRDSSDSADGRATPSENLVPSSARVDKPPS) is disordered. Basic and acidic residues predominate over residues 190–199 (HSRDSSDSAD). Phosphothreonine is present on Thr-203. At Ser-205 the chain carries Phosphoserine. Lys-354 participates in a covalent cross-link: Glycyl lysine isopeptide (Lys-Gly) (interchain with G-Cter in SUMO2). Positions 409–471 (SVGASGSSSR…HRDRERDRHH (63 aa)) are disordered. 2 positions are modified to phosphoserine: Ser-413 and Ser-423. The interval 418–469 (RKRHRSRERSPSRSRESSRRHRDLLHNEDRHDDYFQERNREHERHRDRERDR) is arg/Ser-rich domain. Basic and acidic residues-rich tracts occupy residues 425–434 (ERSPSRSRES) and 441–471 (LLHN…DRHH).

This sequence belongs to the RRM CPSF6/7 family. Component of the cleavage factor Im (CFIm) complex which is a heterotetramer composed of two subunits of NUDT21/CPSF5 and two subunits of CPSF6 or CPSF7 or a heterodimer of CPSF6 and CPSF7. The cleavage factor Im (CFIm) complex associates with the CPSF and CSTF complexes to promote the assembly of the core mRNA 3'-processing machinery. Interacts with NUDT21/CPSF5. Interacts (via Arg/Ser-rich domain) with FIP1L1 (preferentially via unphosphorylated form and Arg/Glu/Asp-rich region); this interaction mediates, at least in part, the interaction between the CFIm and CPSF complexes and may be inhibited by CPSF7 hyper-phosphorylation. In terms of processing, phosphorylated. Asymmetrically dimethylated on arginine residues by PRMT1.

It localises to the nucleus. Its subcellular location is the cytoplasm. Its function is as follows. Component of the cleavage factor Im (CFIm) complex that functions as an activator of the pre-mRNA 3'-end cleavage and polyadenylation processing required for the maturation of pre-mRNA into functional mRNAs. CFIm contributes to the recruitment of multiprotein complexes on specific sequences on the pre-mRNA 3'-end, so called cleavage and polyadenylation signals (pA signals). Most pre-mRNAs contain multiple pA signals, resulting in alternative cleavage and polyadenylation (APA) producing mRNAs with variable 3'-end formation. The CFIm complex acts as a key regulator of cleavage and polyadenylation site choice during APA through its binding to 5'-UGUA-3' elements localized in the 3'-untranslated region (UTR) for a huge number of pre-mRNAs. CPSF7 activates directly the mRNA 3'-processing machinery. Binds to pA signals in RNA substrates. The polypeptide is Cleavage and polyadenylation specificity factor subunit 7 (Mus musculus (Mouse)).